Reading from the N-terminus, the 92-residue chain is Small ribosomal subunit protein uS19 (92 aa).

This sequence belongs to the universal ribosomal protein uS19 family.

Protein S19 forms a complex with S13 that binds strongly to the 16S ribosomal RNA. In Macrococcus caseolyticus (strain JCSC5402) (Macrococcoides caseolyticum), this protein is Small ribosomal subunit protein uS19.